The sequence spans 592 residues: Aspartate--tRNA ligase (592 aa).

L-aspartate is bound at residue Glu173. Positions 197–200 (QLFK) are aspartate. Arg219 contributes to the L-aspartate binding site. ATP is bound by residues 219-221 (RDE) and Gln228. His448 provides a ligand contact to L-aspartate. Glu482 is a binding site for ATP. Arg489 is an L-aspartate binding site. 534–537 (GLDR) provides a ligand contact to ATP.

This sequence belongs to the class-II aminoacyl-tRNA synthetase family. Type 1 subfamily. Homodimer.

The protein localises to the cytoplasm. It catalyses the reaction tRNA(Asp) + L-aspartate + ATP = L-aspartyl-tRNA(Asp) + AMP + diphosphate. Catalyzes the attachment of L-aspartate to tRNA(Asp) in a two-step reaction: L-aspartate is first activated by ATP to form Asp-AMP and then transferred to the acceptor end of tRNA(Asp). The polypeptide is Aspartate--tRNA ligase (Shewanella baltica (strain OS155 / ATCC BAA-1091)).